The primary structure comprises 365 residues: UDP-N-acetylglucosamine--N-acetylmuramyl-(pentapeptide) pyrophosphoryl-undecaprenol N-acetylglucosamine transferase (365 aa).

UDP-N-acetyl-alpha-D-glucosamine contacts are provided by residues 13 to 15 (TGG), Asn125, Arg165, Ser192, and Gln293.

Belongs to the glycosyltransferase 28 family. MurG subfamily.

The protein localises to the cell inner membrane. It carries out the reaction di-trans,octa-cis-undecaprenyl diphospho-N-acetyl-alpha-D-muramoyl-L-alanyl-D-glutamyl-meso-2,6-diaminopimeloyl-D-alanyl-D-alanine + UDP-N-acetyl-alpha-D-glucosamine = di-trans,octa-cis-undecaprenyl diphospho-[N-acetyl-alpha-D-glucosaminyl-(1-&gt;4)]-N-acetyl-alpha-D-muramoyl-L-alanyl-D-glutamyl-meso-2,6-diaminopimeloyl-D-alanyl-D-alanine + UDP + H(+). It participates in cell wall biogenesis; peptidoglycan biosynthesis. In terms of biological role, cell wall formation. Catalyzes the transfer of a GlcNAc subunit on undecaprenyl-pyrophosphoryl-MurNAc-pentapeptide (lipid intermediate I) to form undecaprenyl-pyrophosphoryl-MurNAc-(pentapeptide)GlcNAc (lipid intermediate II). The sequence is that of UDP-N-acetylglucosamine--N-acetylmuramyl-(pentapeptide) pyrophosphoryl-undecaprenol N-acetylglucosamine transferase from Ruegeria sp. (strain TM1040) (Silicibacter sp.).